Here is a 500-residue protein sequence, read N- to C-terminus: Probable cytosol aminopeptidase (500 aa).

Positions 268 and 273 each coordinate Mn(2+). Residue lysine 280 is part of the active site. Mn(2+) contacts are provided by aspartate 291, aspartate 350, and glutamate 352. Arginine 354 is an active-site residue.

The protein belongs to the peptidase M17 family. It depends on Mn(2+) as a cofactor.

It is found in the cytoplasm. It carries out the reaction Release of an N-terminal amino acid, Xaa-|-Yaa-, in which Xaa is preferably Leu, but may be other amino acids including Pro although not Arg or Lys, and Yaa may be Pro. Amino acid amides and methyl esters are also readily hydrolyzed, but rates on arylamides are exceedingly low.. The enzyme catalyses Release of an N-terminal amino acid, preferentially leucine, but not glutamic or aspartic acids.. In terms of biological role, presumably involved in the processing and regular turnover of intracellular proteins. Catalyzes the removal of unsubstituted N-terminal amino acids from various peptides. The protein is Probable cytosol aminopeptidase of Baumannia cicadellinicola subsp. Homalodisca coagulata.